We begin with the raw amino-acid sequence, 468 residues long: Cyclin-T1.1 (468 aa).

Residues 336–354 (KERGVEEERRKRERDRMAG) show a composition bias toward basic and acidic residues. The segment at 336-468 (KERGVEEERR…DMDLEDGELE (133 aa)) is disordered. Residues 387-402 (APPPIPPQLNFPPPPI) show a composition bias toward pro residues. Positions 458-468 (SDMDLEDGELE) are enriched in acidic residues.

This sequence belongs to the cyclin family. Cyclin C subfamily.

Functionally, regulatory subunit of the cyclin-dependent kinase pair (CDK9/cyclin T) complex, also called positive transcription elongation factor B (P-TEFb), which is proposed to facilitate the transition from abortive to production elongation by phosphorylating the CTD (carboxy-terminal domain) of the large subunit of RNA polymerase II (RNAP II). The protein is Cyclin-T1.1 of Caenorhabditis elegans.